Here is a 276-residue protein sequence, read N- to C-terminus: Dermonecrotic toxin LvSicTox-alphaII1 (276 aa).

The active site involves His5. Mg(2+) contacts are provided by Glu25 and Asp27. His41 functions as the Nucleophile in the catalytic mechanism. Intrachain disulfides connect Cys45–Cys51 and Cys47–Cys193. Position 85 (Asp85) interacts with Mg(2+).

It belongs to the arthropod phospholipase D family. Class II subfamily. The cofactor is Mg(2+). As to expression, expressed by the venom gland.

It localises to the secreted. The catalysed reaction is an N-(acyl)-sphingosylphosphocholine = an N-(acyl)-sphingosyl-1,3-cyclic phosphate + choline. It carries out the reaction an N-(acyl)-sphingosylphosphoethanolamine = an N-(acyl)-sphingosyl-1,3-cyclic phosphate + ethanolamine. It catalyses the reaction a 1-acyl-sn-glycero-3-phosphocholine = a 1-acyl-sn-glycero-2,3-cyclic phosphate + choline. The enzyme catalyses a 1-acyl-sn-glycero-3-phosphoethanolamine = a 1-acyl-sn-glycero-2,3-cyclic phosphate + ethanolamine. Dermonecrotic toxins cleave the phosphodiester linkage between the phosphate and headgroup of certain phospholipids (sphingolipid and lysolipid substrates), forming an alcohol (often choline) and a cyclic phosphate. This toxin acts on sphingomyelin (SM). It may also act on ceramide phosphoethanolamine (CPE), lysophosphatidylcholine (LPC) and lysophosphatidylethanolamine (LPE), but not on lysophosphatidylserine (LPS), and lysophosphatidylglycerol (LPG). It acts by transphosphatidylation, releasing exclusively cyclic phosphate products as second products. Induces dermonecrosis, hemolysis, increased vascular permeability, edema, inflammatory response, and platelet aggregation. The chain is Dermonecrotic toxin LvSicTox-alphaII1 from Loxosceles variegata (Recluse spider).